The sequence spans 198 residues: Single-stranded DNA cytosine deaminase (198 aa).

The Bipartite nuclear localization signal signature appears at 1 to 30 (MDSLLMKQRKFLYHFKNVRWAKGRHETYLC). Residues 2–26 (DSLLMKQRKFLYHFKNVRWAKGRHE) are interaction with SUPT6H. A CMP/dCMP-type deaminase domain is found at 23–129 (GRHETYLCYV…KAEPEGLRRL (107 aa)). Residue Thr-27 is modified to Phosphothreonine; by PKA. Ser-38 is subject to Phosphoserine; by PKA. An important for interaction with CTNNBL1 region spans residues 39–42 (ATSF). His-56 provides a ligand contact to Zn(2+). Glu-58 (proton donor) is an active-site residue. Zn(2+) is bound by residues Cys-87 and Cys-90. A required for interaction with RNF126 region spans residues 88-116 (YDCARHVADFLRGYPNLSLRIFAARLYFC). Residues 183-198 (LYEVDDLRDAFRTLGL) carry the Nuclear export signal motif.

It belongs to the cytidine and deoxycytidylate deaminase family. In terms of assembly, interacts with CTNNBL1; the interaction is important for the immunoglobulin switch activity of AICDA. Interacts (via its NLS) with KPNA1. Interacts with PKA/PRKACA and PRKAR1A/PKR1. Interacts with SUPT6H, TRIM28 and NCL. Directly interacts with MCM3AP; this interaction may favor AICDA recruitment to immunoglobulin variable region genes, hence promoting somatic hypermutations. Zn(2+) is required as a cofactor. Ser-38 is the major site whereas Thr-27 is the minor site of phosphorylation. Phosphorylation regulates its class-switch recombination activity. In terms of processing, probably monoubiquitinated on several residues by RNF126. As to expression, expressed in thymus, lung, spleen, kidney, small intestine, lymph node and tonsil.

It localises to the nucleus. The protein resides in the cytoplasm. The enzyme catalyses a 2'-deoxycytidine in single-stranded DNA + H2O + H(+) = a 2'-deoxyuridine in single-stranded DNA + NH4(+). Single-stranded DNA-specific cytidine deaminase. Involved in somatic hypermutation (SHM), gene conversion, and class-switch recombination (CSR) in B-lymphocytes by deaminating C to U during transcription of Ig-variable (V) and Ig-switch (S) region DNA. Required for several crucial steps of B-cell terminal differentiation necessary for efficient antibody responses. May also play a role in the epigenetic regulation of gene expression by participating in DNA demethylation. This Canis lupus familiaris (Dog) protein is Single-stranded DNA cytosine deaminase (AICDA).